The chain runs to 82 residues: RNA-binding protein Hfq (82 aa).

One can recognise a Sm domain in the interval Asp-9–Val-68.

This sequence belongs to the Hfq family. As to quaternary structure, homohexamer.

In terms of biological role, RNA chaperone that binds small regulatory RNA (sRNAs) and mRNAs to facilitate mRNA translational regulation in response to envelope stress, environmental stress and changes in metabolite concentrations. Also binds with high specificity to tRNAs. This chain is RNA-binding protein Hfq, found in Pseudomonas aeruginosa.